We begin with the raw amino-acid sequence, 382 residues long: Mannitol-1-phosphate 5-dehydrogenase (382 aa).

3–14 lines the NAD(+) pocket; the sequence is ALHFGAGNIGRG.

The protein belongs to the mannitol dehydrogenase family.

It catalyses the reaction D-mannitol 1-phosphate + NAD(+) = beta-D-fructose 6-phosphate + NADH + H(+). The chain is Mannitol-1-phosphate 5-dehydrogenase from Salmonella dublin (strain CT_02021853).